Here is a 47-residue protein sequence, read N- to C-terminus: Delta-stichotoxin-Hcr1d (47 aa).

3 cysteine pairs are disulfide-bonded: Cys-3-Cys-43, Cys-5-Cys-33, and Cys-26-Cys-44.

This sequence belongs to the sea anemone sodium channel inhibitory toxin family. Type II subfamily.

It is found in the secreted. The protein localises to the nematocyst. Binds to site 3 of voltage-gated sodium channels and inhibits the inactivation process. The protein is Delta-stichotoxin-Hcr1d of Radianthus crispa (Leathery sea anemone).